The chain runs to 222 residues: UPF0128 protein TK2294 (222 aa).

The protein belongs to the UPF0128 family.

This is UPF0128 protein TK2294 from Thermococcus kodakarensis (strain ATCC BAA-918 / JCM 12380 / KOD1) (Pyrococcus kodakaraensis (strain KOD1)).